A 255-amino-acid polypeptide reads, in one-letter code: Large ribosomal subunit protein uL2 (255 aa).

The segment at 211-235 (PHGGGNHQHVGHATTTKRDDPAGKK) is disordered.

The protein belongs to the universal ribosomal protein uL2 family.

The sequence is that of Large ribosomal subunit protein uL2 (rpl8) from Dictyostelium discoideum (Social amoeba).